The primary structure comprises 510 residues: Probable mannosyl-oligosaccharide alpha-1,2-mannosidase 1B (510 aa).

An N-terminal signal peptide occupies residues 1–21 (MHFSSLSLPLTALSLVTPSLA). 4 N-linked (GlcNAc...) asparagine glycosylation sites follow: N35, N95, N182, and N249. C332 and C361 form a disulfide bridge. The N-linked (GlcNAc...) asparagine glycan is linked to N366. The active-site Proton donor is the E375. A Ca(2+)-binding site is contributed by T501.

Belongs to the glycosyl hydrolase 47 family. In terms of assembly, monomer. The cofactor is Ca(2+). It depends on Mg(2+) as a cofactor.

The protein localises to the cytoplasmic vesicle lumen. It carries out the reaction N(4)-(alpha-D-Man-(1-&gt;2)-alpha-D-Man-(1-&gt;2)-alpha-D-Man-(1-&gt;3)-[alpha-D-Man-(1-&gt;2)-alpha-D-Man-(1-&gt;3)-[alpha-D-Man-(1-&gt;2)-alpha-D-Man-(1-&gt;6)]-alpha-D-Man-(1-&gt;6)]-beta-D-Man-(1-&gt;4)-beta-D-GlcNAc-(1-&gt;4)-beta-D-GlcNAc)-L-asparaginyl-[protein] (N-glucan mannose isomer 9A1,2,3B1,2,3) + 4 H2O = N(4)-(alpha-D-Man-(1-&gt;3)-[alpha-D-Man-(1-&gt;3)-[alpha-D-Man-(1-&gt;6)]-alpha-D-Man-(1-&gt;6)]-beta-D-Man-(1-&gt;4)-beta-D-GlcNAc-(1-&gt;4)-beta-D-GlcNAc)-L-asparaginyl-[protein] (N-glucan mannose isomer 5A1,2) + 4 beta-D-mannose. It catalyses the reaction N(4)-(alpha-D-Man-(1-&gt;2)-alpha-D-Man-(1-&gt;2)-alpha-D-Man-(1-&gt;3)-[alpha-D-Man-(1-&gt;3)-[alpha-D-Man-(1-&gt;2)-alpha-D-Man-(1-&gt;6)]-alpha-D-Man-(1-&gt;6)]-beta-D-Man-(1-&gt;4)-beta-D-GlcNAc-(1-&gt;4)-beta-D-GlcNAc)-L-asparaginyl-[protein] (N-glucan mannose isomer 8A1,2,3B1,3) + 3 H2O = N(4)-(alpha-D-Man-(1-&gt;3)-[alpha-D-Man-(1-&gt;3)-[alpha-D-Man-(1-&gt;6)]-alpha-D-Man-(1-&gt;6)]-beta-D-Man-(1-&gt;4)-beta-D-GlcNAc-(1-&gt;4)-beta-D-GlcNAc)-L-asparaginyl-[protein] (N-glucan mannose isomer 5A1,2) + 3 beta-D-mannose. The protein operates within protein modification; protein glycosylation. Involved in the maturation of Asn-linked oligosaccharides. Progressively trims alpha-1,2-linked mannose residues from Man(9)GlcNAc(2) to produce Man(5)GlcNAc(2). In Aspergillus flavus (strain ATCC 200026 / FGSC A1120 / IAM 13836 / NRRL 3357 / JCM 12722 / SRRC 167), this protein is Probable mannosyl-oligosaccharide alpha-1,2-mannosidase 1B (mns1B).